Reading from the N-terminus, the 344-residue chain is Glycerol-3-phosphate dehydrogenase [NAD(P)+] 2 (344 aa).

Positions 12, 13, 33, 34, and 107 each coordinate NADPH. 3 residues coordinate sn-glycerol 3-phosphate: Lys-107, Gly-138, and Ser-140. Ala-142 is an NADPH binding site. The sn-glycerol 3-phosphate site is built by Lys-193, Asp-246, Ser-256, Arg-257, and Asn-258. The Proton acceptor role is filled by Lys-193. Residue Arg-257 coordinates NADPH. The NADPH site is built by Val-281 and Glu-283.

It belongs to the NAD-dependent glycerol-3-phosphate dehydrogenase family.

Its subcellular location is the cytoplasm. The enzyme catalyses sn-glycerol 3-phosphate + NAD(+) = dihydroxyacetone phosphate + NADH + H(+). It catalyses the reaction sn-glycerol 3-phosphate + NADP(+) = dihydroxyacetone phosphate + NADPH + H(+). It functions in the pathway membrane lipid metabolism; glycerophospholipid metabolism. Functionally, catalyzes the reduction of the glycolytic intermediate dihydroxyacetone phosphate (DHAP) to sn-glycerol 3-phosphate (G3P), the key precursor for phospholipid synthesis. The polypeptide is Glycerol-3-phosphate dehydrogenase [NAD(P)+] 2 (Salinibacter ruber (strain DSM 13855 / M31)).